Reading from the N-terminus, the 476-residue chain is Aspartyl/glutamyl-tRNA(Asn/Gln) amidotransferase subunit B (476 aa).

Belongs to the GatB/GatE family. GatB subfamily. As to quaternary structure, heterotrimer of A, B and C subunits.

The catalysed reaction is L-glutamyl-tRNA(Gln) + L-glutamine + ATP + H2O = L-glutaminyl-tRNA(Gln) + L-glutamate + ADP + phosphate + H(+). It catalyses the reaction L-aspartyl-tRNA(Asn) + L-glutamine + ATP + H2O = L-asparaginyl-tRNA(Asn) + L-glutamate + ADP + phosphate + 2 H(+). Its function is as follows. Allows the formation of correctly charged Asn-tRNA(Asn) or Gln-tRNA(Gln) through the transamidation of misacylated Asp-tRNA(Asn) or Glu-tRNA(Gln) in organisms which lack either or both of asparaginyl-tRNA or glutaminyl-tRNA synthetases. The reaction takes place in the presence of glutamine and ATP through an activated phospho-Asp-tRNA(Asn) or phospho-Glu-tRNA(Gln). The chain is Aspartyl/glutamyl-tRNA(Asn/Gln) amidotransferase subunit B from Oceanobacillus iheyensis (strain DSM 14371 / CIP 107618 / JCM 11309 / KCTC 3954 / HTE831).